The following is a 315-amino-acid chain: Bifunctional protein FolD (315 aa).

NADP(+) is bound by residues 166-168 (GRS), Ser193, and Ile234.

The protein belongs to the tetrahydrofolate dehydrogenase/cyclohydrolase family. As to quaternary structure, homodimer.

It catalyses the reaction (6R)-5,10-methylene-5,6,7,8-tetrahydrofolate + NADP(+) = (6R)-5,10-methenyltetrahydrofolate + NADPH. The catalysed reaction is (6R)-5,10-methenyltetrahydrofolate + H2O = (6R)-10-formyltetrahydrofolate + H(+). It participates in one-carbon metabolism; tetrahydrofolate interconversion. Catalyzes the oxidation of 5,10-methylenetetrahydrofolate to 5,10-methenyltetrahydrofolate and then the hydrolysis of 5,10-methenyltetrahydrofolate to 10-formyltetrahydrofolate. This is Bifunctional protein FolD from Treponema pallidum (strain Nichols).